A 130-amino-acid polypeptide reads, in one-letter code: Large ribosomal subunit protein bL19 (130 aa).

The protein belongs to the bacterial ribosomal protein bL19 family.

Its function is as follows. This protein is located at the 30S-50S ribosomal subunit interface and may play a role in the structure and function of the aminoacyl-tRNA binding site. This chain is Large ribosomal subunit protein bL19, found in Cupriavidus taiwanensis (strain DSM 17343 / BCRC 17206 / CCUG 44338 / CIP 107171 / LMG 19424 / R1) (Ralstonia taiwanensis (strain LMG 19424)).